A 431-amino-acid polypeptide reads, in one-letter code: Glucose-1-phosphate adenylyltransferase (431 aa).

Lys39 is a binding site for beta-D-fructose 1,6-bisphosphate. 3 residues coordinate AMP: Arg40, His46, and Arg52. Tyr114 is a binding site for alpha-D-glucose 1-phosphate. Arg130 is a binding site for AMP. Alpha-D-glucose 1-phosphate contacts are provided by residues Gly179, 194-195 (EK), and Ser212. Glu370 and Arg386 together coordinate AMP. Beta-D-fructose 1,6-bisphosphate is bound by residues 419–423 (REMLR) and 429–431 (QER).

The protein belongs to the bacterial/plant glucose-1-phosphate adenylyltransferase family. As to quaternary structure, homotetramer.

The catalysed reaction is alpha-D-glucose 1-phosphate + ATP + H(+) = ADP-alpha-D-glucose + diphosphate. It functions in the pathway glycan biosynthesis; glycogen biosynthesis. Allosterically activated by fructose-1,6-bisphosphate (F16BP) and inhibited by AMP. In terms of biological role, involved in the biosynthesis of ADP-glucose, a building block required for the elongation reactions to produce glycogen. Catalyzes the reaction between ATP and alpha-D-glucose 1-phosphate (G1P) to produce pyrophosphate and ADP-Glc. In Shigella boydii serotype 18 (strain CDC 3083-94 / BS512), this protein is Glucose-1-phosphate adenylyltransferase.